Here is a 1381-residue protein sequence, read N- to C-terminus: DNA-directed RNA polymerase subunit beta (1381 aa).

It belongs to the RNA polymerase beta chain family. As to quaternary structure, the RNAP catalytic core consists of 2 alpha, 1 beta, 1 beta' and 1 omega subunit. When a sigma factor is associated with the core the holoenzyme is formed, which can initiate transcription.

It carries out the reaction RNA(n) + a ribonucleoside 5'-triphosphate = RNA(n+1) + diphosphate. DNA-dependent RNA polymerase catalyzes the transcription of DNA into RNA using the four ribonucleoside triphosphates as substrates. The sequence is that of DNA-directed RNA polymerase subunit beta from Sulfurimonas denitrificans (strain ATCC 33889 / DSM 1251) (Thiomicrospira denitrificans (strain ATCC 33889 / DSM 1251)).